The primary structure comprises 490 residues: MSLSTLSHPAAAAAAATGSGKSHFRTAPAAQSVRFPKARPPVPAAVSAASAAVHADPAEDRVSSLSQVSGVLGSQWGDEGKGKLVDVLAPRFDIVARCQGGANAGHTIYNAEGKKFALHLVPSGILHEGTLCVVGNGAVIHVPGFFGEIDGLESNGVRCDGRILVSDRAHLLFDLHQVVDGLREAELENSFIGTTKRGIGPCYSSKVTRNGLRVCDLRHMDTFGDKLDVLFKDAASRFQGFQYSKSMLKEEVERYKKFADRLEPFIADTVHVLNESIQQKKKILVEGGQATMLDIDFGTYPFVTSSSPSAGGICTGLGIAPRVIGDLIGVVKAYTSRVGSGPFPTELFGEEGDRLRKAGMEFGTTTGRPRRCGWLDIVALKYCCQINGFSSFNLTKLDVLSGLSEIKVGVSYSRPDGQKLQSFPGDLDTLEQVQVNYEVLPGWQTDISSVRSYNELPQAARLYVERIEELVGVPVHYIGVGPGRDALIYK.

A chloroplast-targeting transit peptide spans 1–47 (MSLSTLSHPAAAAAAATGSGKSHFRTAPAAQSVRFPKARPPVPAAVS). Residues 14-36 (AAATGSGKSHFRTAPAAQSVRFP) are disordered. Residues 77 to 83 (GDEGKGK) and 105 to 107 (GHT) contribute to the GTP site. The active-site Proton acceptor is the Asp78. The Mg(2+) site is built by Asp78 and Gly105. Residues 78-81 (DEGK), 103-106 (NAGH), Thr195, Arg209, Gln289, Thr304, and Arg368 contribute to the IMP site. His106 functions as the Proton donor in the catalytic mechanism. Residue 364–370 (TTTGRPR) participates in substrate binding. GTP-binding positions include Arg370, 396–398 (KLD), and 479–481 (GVG).

The protein belongs to the adenylosuccinate synthetase family. In terms of assembly, homodimer. Requires Mg(2+) as cofactor.

It is found in the plastid. The protein resides in the chloroplast. It catalyses the reaction IMP + L-aspartate + GTP = N(6)-(1,2-dicarboxyethyl)-AMP + GDP + phosphate + 2 H(+). It participates in purine metabolism; AMP biosynthesis via de novo pathway; AMP from IMP: step 1/2. In terms of biological role, plays an important role in the de novo pathway and in the salvage pathway of purine nucleotide biosynthesis. Catalyzes the first committed step in the biosynthesis of AMP from IMP. This is Adenylosuccinate synthetase 1, chloroplastic from Sorghum bicolor (Sorghum).